The chain runs to 617 residues: Syncytin-A (617 aa).

Residues 1–17 (MVRPWVFCLLLFPCSSA) form the signal peptide. Topologically, residues 18-544 (YSDSWMPLVN…WIQWLGLGPW (527 aa)) are extracellular. The N-linked (GlcNAc...) asparagine glycan is linked to N27. The CXXC signature appears at 44–47 (CWVC). Cystine bridges form between C44–C47, C44–C505, and C497–C504. Residues N272 and N365 are each glycosylated (N-linked (GlcNAc...) asparagine). The segment at 420-440 (LLPLLAGLGIASALGLGIAGI) is fusion peptide. Residues 497–505 (CLFLQEECC) carry the CX6CC motif. A helical transmembrane segment spans residues 545-565 (LPSWLTSLMAPILFILVLLVF). The Cytoplasmic segment spans residues 566–617 (RPCLLNCLTHSVSRRMSSFIHTTTEGHVDKILLLRESQYKRLPQEPPEEDAV).

Belongs to the gamma type-C retroviral envelope protein family. In terms of assembly, the mature protein consists of a trimer of SU-TM heterodimers. The SU-TM heterodimers are attached by a labile interchain disulfide bond. Post-translationally, synthesized as an inactive precursor that is heavily N-glycosylated and processed likely by furin in the Golgi to yield the mature SU and TM proteins. The cleavage site between SU and TM requires the minimal sequence [KR]-X-[KR]-R. The CXXC motif is highly conserved across a broad range of retroviral envelope proteins. It is thought to participate in the formation of a labile disulfide bond possibly with the CX6CC motif present in the transmembrane protein. Isomerization of the intersubunit disulfide bond to an SU intrachain disulfide bond is thought to occur upon receptor recognition in order to allow membrane fusion. As to expression, highly expressed in placenta where it localizes to syncytiotrophoblasts of the labyrinthine zona. Specifically localizes to syncytiotrophoblast layer I (SynT-I). Also detected at very low levels in hippocampus, brain, testis and ovary.

The protein localises to the cell membrane. Its function is as follows. This endogenous retroviral envelope protein has retained its original fusogenic properties. Together with Synb, participates in trophoblast fusion and the formation of a syncytium during placenta morphogenesis. Syna is essential for placental development and is specifically required for formation of syncytiotrophoblast layer I (SynT-I). Promotes muscle myoblast fusion. Does not have immunosuppressive activity. The polypeptide is Syncytin-A (Mus musculus (Mouse)).